Consider the following 366-residue polypeptide: MEETSVAGDPGPDAGTSTAPNAAPEPVARRQRILFVGEAATLAHVVRPFVLARSLDPSRYEVHFACDPRFNKLLGPLPFPHHPIHTVPSEEVLLKIAQGRLFYNTRTLRKYIAADRKILNEIAPDVVVGDNRLSLSVSARLAGIPYIAIANAYWSPQARRRFPLPDVPWTRFFGVRPVSILYRLYRPLIFALYCLPLNWLRRKHGLSSLGWDLCRIFTDGDYTLYADVPELVPTYNLPANHRYLGPVLWSPDVKPPTWWHSLPTDRPIIYATLGSSGGKNLLQVVLNALGRFTRDGDRGHRWPEPPEERAGQRLRRGLPAGRSGCSALRRGALQRRQPDDAAGVGGRGAGDRAPQQHGPALEHGGP.

Disordered stretches follow at residues 1 to 23 (MEET…PNAA) and 295 to 366 (DGDR…HGGP). Residues 295–311 (DGDRGHRWPEPPEERAG) show a composition bias toward basic and acidic residues.

Belongs to the UDP-glycosyltransferase family.

This is Inactive PGL/p-HBAD biosynthesis glycosyltransferase Mb2982c from Mycobacterium bovis (strain ATCC BAA-935 / AF2122/97).